Reading from the N-terminus, the 400-residue chain is NAD-dependent protein deacetylase sirtuin-7 (400 aa).

A disordered region spans residues 1–28; the sequence is MAAGGLSRSERKAAERVRRLREEQQRER. Residues 8-28 show a composition bias toward basic and acidic residues; it reads RSERKAAERVRRLREEQQRER. In terms of domain architecture, Deacetylase sirtuin-type spans 82 to 329; that stretch reads PEELQRKVRE…QLLMDELGLE (248 aa). NAD(+) contacts are provided by residues 107 to 126 and 167 to 170; these read GAGISTAASIPDYRGPNGVW and QNCD. His-187 serves as the catalytic Proton acceptor. The Zn(2+) site is built by Cys-195, Cys-198, Cys-225, and Cys-228. NAD(+) is bound by residues 268–270, 297–299, and Cys-315; these read GSS and NLQ. Residues 354–380 form a disordered region; it reads SHSRKSLCRSREEPGPGDRGAPLSSAP. The residue at position 388 (Arg-388) is an Asymmetric dimethylarginine; alternate. Arg-388 carries the omega-N-methylarginine; alternate modification.

The protein belongs to the sirtuin family. Class IV subfamily. In terms of assembly, interacts with UBTF and the RNA polymerase I complex. Interacts with components of the B-WICH complex, such as MYBBP1A, SMARCA5/SNF2H and BAZ1B/WSTF. Interacts with ELK4, leading to stabilization at target promoters for H3K18Ac deacetylation. Interacts with histone H2A and/or histone H2B. Interacts with DNMT1. Interacts with SIRT1. Zn(2+) is required as a cofactor. In terms of processing, phosphorylated during mitosis. Methylation at Arg-388 by PRMT6 inhibits the H3K18Ac histone deacetylase activity, promoting mitochondria biogenesis and maintaining mitochondria respiration. Post-translationally, ubiquitinated via 'Lys-63'-linked ubiquitin chains. Deubiquitinated by USP7, inhibiting the H3K18Ac histone deacetylase activity and regulating gluconeogenesis. Ubiquitinated by E3 ubiquitin-protein ligase complex containing FBXO7; leading to proteasomal degradation.

The protein localises to the nucleus. Its subcellular location is the nucleolus. It is found in the nucleoplasm. The protein resides in the chromosome. It localises to the cytoplasm. It carries out the reaction N(6)-acetyl-L-lysyl-[protein] + NAD(+) + H2O = 2''-O-acetyl-ADP-D-ribose + nicotinamide + L-lysyl-[protein]. The catalysed reaction is N(6)-glutaryl-L-lysyl-[protein] + NAD(+) + H2O = 2''-O-glutaryl-ADP-D-ribose + nicotinamide + L-lysyl-[protein]. It catalyses the reaction N(6)-succinyl-L-lysyl-[protein] + NAD(+) + H2O = 2''-O-succinyl-ADP-D-ribose + nicotinamide + L-lysyl-[protein]. The enzyme catalyses N(6)-propanoyl-L-lysyl-[protein] + NAD(+) + H2O = 3''-O-propanoyl-ADP-D-ribose + nicotinamide + L-lysyl-[protein]. It carries out the reaction N(6)-decanoyl-L-lysyl-[protein] + NAD(+) + H2O = 2''-O-decanoyl-ADP-D-ribose + nicotinamide + L-lysyl-[protein]. NAD-dependent protein-lysine deacetylase and deacylase activities are activated by nucleic acids. Histone deacetylase activity is activated by DNA. Protein-lysine deacylase activity is activated by RNA. H3K18Ac histone deacetylase activity is inhibited by methylation at Arg-388. H3K18Ac histone deacetylase activity is inhibited by deubiquitination by USP7. Functionally, NAD-dependent protein-lysine deacylase that can act both as a deacetylase or deacylase (desuccinylase, depropionylase, deglutarylase and dedecanoylase), depending on the context. Specifically mediates deacetylation of histone H3 at 'Lys-18' (H3K18Ac). In contrast to other histone deacetylases, displays strong preference for a specific histone mark, H3K18Ac, directly linked to control of gene expression. H3K18Ac is mainly present around the transcription start site of genes and has been linked to activation of nuclear hormone receptors; SIRT7 thereby acts as a transcription repressor. Moreover, H3K18 hypoacetylation has been reported as a marker of malignancy in various cancers and seems to maintain the transformed phenotype of cancer cells. Also able to mediate deacetylation of histone H3 at 'Lys-36' (H3K36Ac) in the context of nucleosomes. Also mediates deacetylation of non-histone proteins, such as ATM, CDK9, DDX21, DDB1, FBL, FKBP5/FKBP51, GABPB1, RAN, RRP9/U3-55K and POLR1E/PAF53. Enriched in nucleolus where it stimulates transcription activity of the RNA polymerase I complex. Acts by mediating the deacetylation of the RNA polymerase I subunit POLR1E/PAF53, thereby promoting the association of RNA polymerase I with the rDNA promoter region and coding region. In response to metabolic stress, SIRT7 is released from nucleoli leading to hyperacetylation of POLR1E/PAF53 and decreased RNA polymerase I transcription. Required to restore the transcription of ribosomal RNA (rRNA) at the exit from mitosis. Promotes pre-ribosomal RNA (pre-rRNA) cleavage at the 5'-terminal processing site by mediating deacetylation of RRP9/U3-55K, a core subunit of the U3 snoRNP complex. Mediates 'Lys-37' deacetylation of Ran, thereby regulating the nuclear export of NF-kappa-B subunit RELA/p65. Acts as a regulator of DNA damage repair by mediating deacetylation of ATM during the late stages of DNA damage response, promoting ATM dephosphorylation and deactivation. Suppresses the activity of the DCX (DDB1-CUL4-X-box) E3 ubiquitin-protein ligase complexes by mediating deacetylation of DDB1, which prevents the interaction between DDB1 and CUL4 (CUL4A or CUL4B). Activates RNA polymerase II transcription by mediating deacetylation of CDK9, thereby promoting 'Ser-2' phosphorylation of the C-terminal domain (CTD) of RNA polymerase II. Deacetylates FBL, promoting histone-glutamine methyltransferase activity of FBL. Acts as a regulator of mitochondrial function by catalyzing deacetylation of GABPB1. Regulates Akt/AKT1 activity by mediating deacetylation of FKBP5/FKBP51. Required to prevent R-loop-associated DNA damage and transcription-associated genomic instability by mediating deacetylation and subsequent activation of DDX21, thereby overcoming R-loop-mediated stalling of RNA polymerases. In addition to protein deacetylase activity, also acts as a protein-lysine deacylase. Acts as a protein depropionylase by mediating depropionylation of Osterix (SP7), thereby regulating bone formation by osteoblasts. Acts as a histone deglutarylase by mediating deglutarylation of histone H4 on 'Lys-91' (H4K91glu); a mark that destabilizes nucleosomes by promoting dissociation of the H2A-H2B dimers from nucleosomes. Acts as a histone desuccinylase: in response to DNA damage, recruited to DNA double-strand breaks (DSBs) and catalyzes desuccinylation of histone H3 on 'Lys-122' (H3K122succ), thereby promoting chromatin condensation and DSB repair. Also promotes DSB repair by promoting H3K18Ac deacetylation, regulating non-homologous end joining (NHEJ). Along with its role in DNA repair, required for chromosome synapsis during prophase I of female meiosis by catalyzing H3K18Ac deacetylation. Involved in transcriptional repression of LINE-1 retrotransposon via H3K18Ac deacetylation, and promotes their association with the nuclear lamina. Required to stabilize ribosomal DNA (rDNA) heterochromatin and prevent cellular senescence induced by rDNA instability. Acts as a negative regulator of SIRT1 by preventing autodeacetylation of SIRT1, restricting SIRT1 deacetylase activity. The chain is NAD-dependent protein deacetylase sirtuin-7 (SIRT7) from Bos taurus (Bovine).